We begin with the raw amino-acid sequence, 36 residues long: Trypsin inhibitor 2 (36 aa).

3 disulfide bridges follow: Cys-3-Cys-20, Cys-10-Cys-24, and Cys-19-Cys-35.

Functionally, trypsin inhibitor. In Spinacia oleracea (Spinach), this protein is Trypsin inhibitor 2.